The sequence spans 371 residues: Peptidyl-prolyl cis-trans isomerase CPR6 (371 aa).

In terms of domain architecture, PPIase cyclophilin-type spans 7 to 174; it reads FFDISIGGKP…RDVKIDDCGV (168 aa). 3 TPR repeats span residues 219–252, 270–303, and 308–341; these read IETVKNIGTEQFKKQNYSVALEKYVKCDKFLKEY, VSIPLNIAICALKLKDYKQVLVASSEVLYAEAAD, and AKALYRRGLAYYHVNDTDMALNDLEMATTFQPND.

The protein belongs to the cyclophilin-type PPIase family. PPIase D subfamily. As to quaternary structure, interacts with RPD3.

It is found in the cytoplasm. It carries out the reaction [protein]-peptidylproline (omega=180) = [protein]-peptidylproline (omega=0). PPIases accelerate the folding of proteins. It catalyzes the cis-trans isomerization of proline imidic peptide bonds in oligopeptides. This Saccharomyces cerevisiae (strain ATCC 204508 / S288c) (Baker's yeast) protein is Peptidyl-prolyl cis-trans isomerase CPR6 (CPR6).